We begin with the raw amino-acid sequence, 297 residues long: Magnetosome protein MamB (297 aa).

The Cytoplasmic segment spans residues 1-12 (MKFENCRDCREE). The segment at 1–214 (MKFENCRDCR…GLMDSSVDTE (214 aa)) is transmembrane domain (TMD). A helical membrane pass occupies residues 13 to 33 (VVWWAFTADICMTLFKGILGL). Residues 34-83 (MSGSVALVADSLHSGADVVASGVTQLSLKISNKPADERYPFGYGNIQYIS) are Lumenal-facing. The helical transmembrane segment at 84 to 104 (SAIVGSLLLIGASFLMYGSVV) threads the bilayer. Over 105–112 (KLISGTYE) the chain is Cytoplasmic. A helical transmembrane segment spans residues 113 to 133 (APSIFAALGASVTVIVNELMY). Topologically, residues 134–164 (RYQICVGNENNSPAIIANAWDNRSDAISSAA) are lumenal. The helical transmembrane segment at 165–185 (VMVGVIASVIGFPIADTIAAI) threads the bilayer. The Cytoplasmic segment spans residues 186 to 297 (GVSALVGHIG…PAPAAVTVRV (112 aa)). The interval 215-297 (LLQTAWQIAT…PAPAAVTVRV (83 aa)) is C-terminal domain (CTD).

It belongs to the cation diffusion facilitator (CDF) transporter (TC 2.A.4) family. Forms homodimers via its C-terminal domain, may form higher order multimers that are sensitive to reducing agent. Probably interacts with MamE. Interacts with MamM via their C-terminal domains.

The protein localises to the cell inner membrane. It is found in the magnetosome membrane. Its function is as follows. Plays a dual, essential role in magnetosome formation; required for magnetosome vesicle formation as well as biomineralization. Requires heterodimerization with MamM for stability. Probably binds and transports iron. One of 7 genes (mamLQBIEMO) able to induce magnetosome membrane biogenesis; coexpression of mamLQRBIEMO in a deletion of the 17 gene mamAB operon restores magnetosome vesicle formation but not magnetite biosynthesis. The polypeptide is Magnetosome protein MamB (Magnetospirillum gryphiswaldense (strain DSM 6361 / JCM 21280 / NBRC 15271 / MSR-1)).